Consider the following 131-residue polypeptide: MSASAKLSRMVCLLCGFFSTGISMASSLILLSASDLAGQWTLQQDEAPAICHLELRDSEVAEASGYDLGGDTACLTRWLPSEPRAWRPTPAGIALLERGGLTLMLLGRQGEGDYRVQKGDGGQLVLRRATP.

The N-terminal stretch at 1–26 (MSASAKLSRMVCLLCGFFSTGISMAS) is a signal peptide. Residues C51 and C74 are joined by a disulfide bond.

Belongs to the protease inhibitor I38 family.

The protein resides in the periplasm. In terms of biological role, inhibitor of the alkaline protease. It forms a non-covalent bond with the protease and may prevent its autocatalytic cleavage in the periplasm. This chain is Proteinase inhibitor (inh), found in Pseudomonas aeruginosa (strain ATCC 15692 / DSM 22644 / CIP 104116 / JCM 14847 / LMG 12228 / 1C / PRS 101 / PAO1).